We begin with the raw amino-acid sequence, 344 residues long: Heat-inducible transcription repressor HrcA (344 aa).

The protein belongs to the HrcA family.

In terms of biological role, negative regulator of class I heat shock genes (grpE-dnaK-dnaJ and groELS operons). Prevents heat-shock induction of these operons. In Streptococcus equi subsp. equi (strain 4047), this protein is Heat-inducible transcription repressor HrcA.